The following is a 380-amino-acid chain: MKKSIGILSPGVALGTAGSAMSSKFFVMALAVFFSFAQVVIEANSWWSLGMNNPVQMSEVYIIGAQPLCSQLAGLSQGQKKLCHLYQDHMQYIGEGAKTGIKECQYQFRHRRWNCSTVDNTSVFGRVMQIGSRETAFTYAVSAAGVVNAMSRACREGELSTCGCSRAARPKDLPRDWLWGGCGDNIDYGYRFAKEFVDARERERIHAKGSYESARILMNLHNNEAGRRTVYNLADVACKCHGVSGSCSLKTCWLQLADFRKVGDALKEKYDSAAAMRLNSRGKLVQVNSRFNSPTTQDLVYIDPSPDYCVRNESTGSLGTQGRLCNKTSEGMDGCELMCCGRGYDQFKTVQTERCHCKFHWCCYVKCKKCTEIVDQFVCK.

A signal peptide spans 1–35; it reads MKKSIGILSPGVALGTAGSAMSSKFFVMALAVFFS. Residues 36–61 constitute a propeptide that is removed on maturation; it reads FAQVVIEANSWWSLGMNNPVQMSEVY. A disulfide bond links Cys104 and Cys115. Asn114 and Asn120 each carry an N-linked (GlcNAc...) asparagine glycan. Cystine bridges form between Cys154/Cys162, Cys164/Cys182, Cys238/Cys252, Cys240/Cys247, Cys309/Cys340, Cys325/Cys335, Cys339/Cys379, Cys355/Cys370, Cys357/Cys367, and Cys362/Cys363. Residue Ser244 is the site of O-palmitoleoyl serine; by PORCN attachment. 2 N-linked (GlcNAc...) asparagine glycosylation sites follow: Asn312 and Asn326.

It belongs to the Wnt family. As to quaternary structure, forms a soluble 1:1 complex with AFM; this prevents oligomerization and is required for prolonged biological activity. The complex with AFM may represent the physiological form in body fluids. Homooligomer; disulfide-linked, leading to inactivation (in vitro). Interacts with PORCN. Interacts with WLS. Interacts with glypican GCP3. Interacts with PKD1 (via extracellular domain). Interacts with TMEM67. Post-translationally, glycosylation is necessary for secretion but not for activity. Palmitoleoylation is required for efficient binding to frizzled receptors. Depalmitoleoylation leads to Wnt signaling pathway inhibition. In terms of processing, proteolytic processing by TIKI1 and TIKI2 promotes oxidation and formation of large disulfide-bond oligomers, leading to inactivation of WNT5A.

The protein localises to the secreted. It is found in the extracellular space. Its subcellular location is the extracellular matrix. Functionally, ligand for members of the frizzled family of seven transmembrane receptors. Can activate or inhibit canonical Wnt signaling, depending on receptor context. In the presence of FZD4, activates beta-catenin signaling. In the presence of ROR2, inhibits the canonical Wnt pathway by promoting beta-catenin degradation through a GSK3-independent pathway which involves down-regulation of beta-catenin-induced reporter gene expression. Suppression of the canonical pathway allows chondrogenesis to occur. Inhibits tumor formation. Stimulates cell migration. Decreases proliferation, migration, invasiveness and clonogenicity of carcinoma cells and may act as a tumor suppressor. Mediates motility of melanoma cells. Required during embryogenesis for extension of the primary anterior-posterior axis and for outgrowth of limbs and the genital tubercle. Inhibits type II collagen expression in chondrocytes. This Oryctolagus cuniculus (Rabbit) protein is Protein Wnt-5a.